The chain runs to 462 residues: Probable DNA-directed RNA polymerase subunit 343L (462 aa).

This sequence belongs to the RNA polymerase beta' chain family.

The catalysed reaction is RNA(n) + a ribonucleoside 5'-triphosphate = RNA(n+1) + diphosphate. Functionally, component of the DNA-dependent RNA polymerase that catalyzes the transcription in the cytoplasm of viral DNA into RNA using the four ribonucleoside triphosphates as substrates. The sequence is that of Probable DNA-directed RNA polymerase subunit 343L from Acheta domesticus (House cricket).